The chain runs to 491 residues: Putative pentatricopeptide repeat-containing protein At1g02420 (491 aa).

PPR repeat units lie at residues 179–209, 210–244, 245–279, 280–314, 315–349, 350–384, 385–419, and 420–454; these read DTAC…LKHQ, FQPD…GLKP, DVVT…EETP, DVIT…GCYP, DVAA…GLSP, NATT…ECLP, NTQS…GFGS, and YSLV…GHRP.

The protein belongs to the PPR family. P subfamily.

The chain is Putative pentatricopeptide repeat-containing protein At1g02420 from Arabidopsis thaliana (Mouse-ear cress).